A 651-amino-acid chain; its full sequence is Chaperone protein dnaK1 (651 aa).

The residue at position 197 (threonine 197) is a Phosphothreonine; by autocatalysis.

Belongs to the heat shock protein 70 family.

Acts as a chaperone. The protein is Chaperone protein dnaK1 (dnaK1) of Thermosynechococcus vestitus (strain NIES-2133 / IAM M-273 / BP-1).